A 276-amino-acid polypeptide reads, in one-letter code: Type 2 phosphatidylinositol 4,5-bisphosphate 4-phosphatase (276 aa).

Residues 1–10 (MAADGIDERS) show a composition bias toward basic and acidic residues. The tract at residues 1–27 (MAADGIDERSPLISPSSGNVTPTAPPY) is disordered. Residues 13–27 (ISPSSGNVTPTAPPY) are compositionally biased toward polar residues. Cys-106 is a catalytic residue. The short motif at 106–112 (CKDISRR) is the CX5R motif element. The next 2 helical transmembrane spans lie at 211–231 (CCTYITMGMICIFIGVGLTVG) and 246–266 (WAVAYLVGLVCLIRACYWGAI).

The protein resides in the late endosome membrane. It is found in the lysosome membrane. It carries out the reaction a 1,2-diacyl-sn-glycero-3-phospho-(1D-myo-inositol-4,5-bisphosphate) + H2O = a 1,2-diacyl-sn-glycero-3-phospho-(1D-myo-inositol-5-phosphate) + phosphate. Catalyzes the hydrolysis of phosphatidylinositol-4,5-bisphosphate (PtdIns-4,5-P2) to phosphatidylinositol-4-phosphate (PtdIns-4-P). The protein is Type 2 phosphatidylinositol 4,5-bisphosphate 4-phosphatase (pip4p2) of Xenopus tropicalis (Western clawed frog).